A 260-amino-acid polypeptide reads, in one-letter code: Thiamine thiazole synthase (260 aa).

Residues S41, 60–61 (ER), G68, V131, and 159–161 (HVD) contribute to the NAD(+) site. Fe cation contacts are provided by D161 and H176. NAD(+) is bound at residue M225. Glycine is bound at residue R235.

This sequence belongs to the THI4 family. As to quaternary structure, homooctamer; tetramer of dimers. The cofactor is Fe(2+).

The enzyme catalyses hydrogen sulfide + glycine + NAD(+) = ADP-5-ethyl-4-methylthiazole-2-carboxylate + nicotinamide + 3 H2O + H(+). It functions in the pathway cofactor biosynthesis; thiamine diphosphate biosynthesis. Its function is as follows. Involved in the biosynthesis of the thiazole moiety of thiamine. Catalyzes the conversion of NAD and glycine to adenosine diphosphate 5-(2-hydroxyethyl)-4-methylthiazole-2-carboxylate (ADT), an adenylated thiazole intermediate, using free sulfide as a source of sulfur. This chain is Thiamine thiazole synthase, found in Archaeoglobus fulgidus (strain ATCC 49558 / DSM 4304 / JCM 9628 / NBRC 100126 / VC-16).